The primary structure comprises 166 residues: Cyclic pyranopterin monophosphate synthase (166 aa).

Residues 75-77 (MCH) and 115-116 (ME) contribute to the substrate site. D130 is a catalytic residue.

Belongs to the MoaC family. In terms of assembly, homohexamer; trimer of dimers.

It carries out the reaction (8S)-3',8-cyclo-7,8-dihydroguanosine 5'-triphosphate = cyclic pyranopterin phosphate + diphosphate. It functions in the pathway cofactor biosynthesis; molybdopterin biosynthesis. In terms of biological role, catalyzes the conversion of (8S)-3',8-cyclo-7,8-dihydroguanosine 5'-triphosphate to cyclic pyranopterin monophosphate (cPMP). The polypeptide is Cyclic pyranopterin monophosphate synthase (Shouchella clausii (strain KSM-K16) (Alkalihalobacillus clausii)).